The primary structure comprises 222 residues: 7-cyano-7-deazaguanine synthase (222 aa).

14-24 (FSGGQDSTTCL) provides a ligand contact to ATP. Cysteine 192, cysteine 201, cysteine 204, and cysteine 207 together coordinate Zn(2+).

The protein belongs to the QueC family. Homodimer. It depends on Zn(2+) as a cofactor.

The enzyme catalyses 7-carboxy-7-deazaguanine + NH4(+) + ATP = 7-cyano-7-deazaguanine + ADP + phosphate + H2O + H(+). Its pathway is purine metabolism; 7-cyano-7-deazaguanine biosynthesis. Functionally, catalyzes the ATP-dependent conversion of 7-carboxy-7-deazaguanine (CDG) to 7-cyano-7-deazaguanine (preQ(0)). This chain is 7-cyano-7-deazaguanine synthase, found in Clostridium acetobutylicum (strain ATCC 824 / DSM 792 / JCM 1419 / IAM 19013 / LMG 5710 / NBRC 13948 / NRRL B-527 / VKM B-1787 / 2291 / W).